We begin with the raw amino-acid sequence, 409 residues long: Sulfide-quinone reductase (409 aa).

FAD contacts are provided by residues 8–12 (GGRFG), 34–35 (NK), and C129. The active-site Cysteine persulfide intermediate is C178. The FAD site is built by N271, D307, and G317. Residue C350 is the Cysteine persulfide intermediate of the active site.

Belongs to the SQRD family. In terms of assembly, monomer. FAD is required as a cofactor.

It localises to the membrane. It catalyses the reaction n a quinone + n hydrogen sulfide + n H(+) = polysulfur(n-2) + n a quinol. With respect to regulation, inhibited by the quinone analog 2-heptyl-4-hydroxyquinolone N-oxide (HQNO). Inactivated by iodoacetamide treatment. Inhibited by KCN. Functionally, catalyzes the oxidation of sulfides, such as hydrogen sulfide, with the help of a quinone. Has the highest activity with caldariella quinone and decylubiquinone, and lower activity with naphtoquinones. Consecutive reaction cycles lead to the accumulation of a polysulfide product on the active site Cys residues; these products are released when they exceed a critical length, typically as cyclooctasulfur. In Acidianus ambivalens (Desulfurolobus ambivalens), this protein is Sulfide-quinone reductase.